A 154-amino-acid chain; its full sequence is MAARLCCQLDTARDVLCLRPVGAESRGRPFSGSVGALPPSSPPAVPADHGAHLSLRGLPVCAFSSAGPCALRFTSARCMETTVNAPRNLPKVLHKRTLGLSTMSTTGIETYFKDCVFKDWEELGEEIRLKVFVLGGCRHKLVCSPAPCNFFTSA.

Positions 68–117 (PCALRFTSARCMETTVNAPRNLPKVLHKRTLGLSTMSTTGIETYFKDCVF) are mitochondrial targeting sequence.

The protein belongs to the orthohepadnavirus protein X family. May form homodimer. May interact with host CEBPA, CFLAR, CREB1, DDB1, E4F1, HBXIP, HSPD1/HSP60, NFKBIA, POLR2E and SMAD4. Interacts with host SMC5-SMC6 complex and induces its degradation. Interacts with host TRPC4AP; leading to prevent ubiquitination of TRPC4AP. Interacts with host PLSCR1; this interaction promotes ubiquitination and degradation of HBx and impairs HBx-mediated cell proliferation. A fraction may be phosphorylated in insect cells and HepG2 cells, a human hepatoblastoma cell line. Phosphorylated in vitro by host protein kinase C or mitogen-activated protein kinase. N-acetylated in insect cells.

The protein localises to the host cytoplasm. It localises to the host nucleus. Its subcellular location is the host mitochondrion. In terms of biological role, multifunctional protein that plays a role in silencing host antiviral defenses and promoting viral transcription. Does not seem to be essential for HBV infection. May be directly involved in development of cirrhosis and liver cancer (hepatocellular carcinoma). Most of cytosolic activities involve modulation of cytosolic calcium. The effect on apoptosis is controversial depending on the cell types in which the studies have been conducted. May induce apoptosis by localizing in mitochondria and causing loss of mitochondrial membrane potential. May also modulate apoptosis by binding host CFLAR, a key regulator of the death-inducing signaling complex (DISC). Promotes viral transcription by using the host E3 ubiquitin ligase DDB1 to target the SMC5-SMC6 complex to proteasomal degradation. This host complex would otherwise bind to viral episomal DNA, and prevents its transcription. Moderately stimulates transcription of many different viral and cellular transcription elements. Promoters and enhancers stimulated by HBx contain DNA binding sites for NF-kappa-B, AP-1, AP-2, c-EBP, ATF/CREB, or the calcium-activated factor NF-AT. The sequence is that of Protein X from Orangutan hepatitis B virus (isolate Somad) (HBVoru).